Consider the following 340-residue polypeptide: CRISPR system Cmr subunit Cmr6 (340 aa).

This sequence belongs to the CRISPR system Cmr6 family. Part of the type III-B Cmr ribonucleoprotein (RNP) complex, an elongated RNP with Cmr2 and Cmr3 as the base, with Cmr4 and Cmr5 forming a helical core along the mature crRNA (39 or 45 nt in length), while the complex is capped by Cmr6 and Cmr1. The 5' end of the crRNA is bound to Cmr2 and Cmr3, while Cmr6 and a Cmr1 subunit (Cmr1-1 or Cmr1-2) cap the 3' end of the crRNA. The target RNA lies antiparallel to the crRNA, with its 5' end near Cmr1 and Cmr6 and its 3' end near Cmr2 and Cmr3; major target cleavage occurs nears the junction of Cmr1/Cmr6 and Cmr4/Cmr, with minor cleavage occurring at 6 nt intervals which coincide with the proposed spacing of Cmr4 subunits. Interacts with Cmr4 and Cmr5.

It is found in the cytoplasm. Its function is as follows. CRISPR (clustered regularly interspaced short palindromic repeat), is an adaptive immune system that provides protection against mobile genetic elements (viruses, transposable elements and conjugative plasmids). CRISPR clusters contain sequences complementary to antecedent mobile elements and target invading nucleic acids. CRISPR clusters are transcribed and processed into CRISPR RNA (crRNA), formerly called psiRNA (prokaryotic silencing) in this organism. Part of the Cmr ribonucleoprotein complex which has divalent cation-dependent endoribonuclease activity specific for ssRNA complementary to the crRNA (target RNA), generating 5' hydroxy- and 3' phosphate or 2'-3' cyclic phosphate termini. Cmr4 is probably the subunit that cleaves target RNA. Cmr complex does not cleave ssDNA complementary to the crRNA. Cleavage of invading RNA is guided by the crRNA; substrate cleavage occurs a fixed distance (14 nt) from the 3' end of the crRNA. In vitro reconstitution shows Cmr1-2 and Cmr5 are not absolutely necessary for target cleavage. The chain is CRISPR system Cmr subunit Cmr6 from Pyrococcus furiosus (strain ATCC 43587 / DSM 3638 / JCM 8422 / Vc1).